Reading from the N-terminus, the 207-residue chain is Thymidylate kinase (207 aa).

Residue 7–14 (GCEGSGKS) coordinates ATP.

This sequence belongs to the thymidylate kinase family.

It carries out the reaction dTMP + ATP = dTDP + ADP. Its function is as follows. Phosphorylation of dTMP to form dTDP in both de novo and salvage pathways of dTTP synthesis. This Chlamydia caviae (strain ATCC VR-813 / DSM 19441 / 03DC25 / GPIC) (Chlamydophila caviae) protein is Thymidylate kinase.